The primary structure comprises 663 residues: UvrABC system protein B (663 aa).

In terms of domain architecture, Helicase ATP-binding spans 26–414; the sequence is DGLESGLAKQ…DNVAEQVVRP (389 aa). ATP is bound at residue 39–46; the sequence is GVTGSGKT. The Beta-hairpin motif lies at 92–115; it reads YYDYYQPEAYVPASDTFIEKDASI. Positions 430-596 constitute a Helicase C-terminal domain; the sequence is QVDDLMSEIR…GINKSVEDIL (167 aa). One can recognise a UVR domain in the interval 624 to 659; that stretch reads AKEINALEKQMYAHAQNMEFELAAKIRDEYLLLKEQ.

This sequence belongs to the UvrB family. In terms of assembly, forms a heterotetramer with UvrA during the search for lesions. Interacts with UvrC in an incision complex.

It is found in the cytoplasm. In terms of biological role, the UvrABC repair system catalyzes the recognition and processing of DNA lesions. A damage recognition complex composed of 2 UvrA and 2 UvrB subunits scans DNA for abnormalities. Upon binding of the UvrA(2)B(2) complex to a putative damaged site, the DNA wraps around one UvrB monomer. DNA wrap is dependent on ATP binding by UvrB and probably causes local melting of the DNA helix, facilitating insertion of UvrB beta-hairpin between the DNA strands. Then UvrB probes one DNA strand for the presence of a lesion. If a lesion is found the UvrA subunits dissociate and the UvrB-DNA preincision complex is formed. This complex is subsequently bound by UvrC and the second UvrB is released. If no lesion is found, the DNA wraps around the other UvrB subunit that will check the other stand for damage. This is UvrABC system protein B from Legionella pneumophila (strain Paris).